The following is a 545-amino-acid chain: MTKYIFITGGVVSSLGKGIAAASLAAILEARGLRVTLIKLDPYINVDPGTMSPFQHGEVFVTNDGAETDLDLGHYERFVKTTMTKRNNFTSGKIYENVIKKERRGDYLGGTVQVIPHITNEIKRCIKLGADAFDVAMVEIGGTVGDIESLPFLEAIRQMRIELGSQRAIFIHLTLVPYIATSGETKTKPTQHSVKELRSIGIQPDVLICRSEKPLSMADRAKIALFTNVEKEAVISLEDANSIYQIPMILHAQHLDEIVVKKLSLEAKQADLSEWQRVVDMQAVQTMTVKIAMVGKYTELNDAYKSINEALLHAGIHTETKVEIIYFDAEMIEKHGALLLESIDAILVPGGFGERGVEGKIKAIQYAREHKVPFLGICLGMQTAVIEFARNVVGLTGANSTEFNKETLYPVLGLISEWMDADGSKQIRDENTDLGGTMRLGGQYCHLAEGTLARKVYGKPQIIERHRHRYEVNNKYVDSLVKHGLIISGRSADNSLVEMIELADHPWFLACQFHPEFTSNPRDSHPLFKEFVLAARIHHQEKDKK.

Residues 1-265 (MTKYIFITGG…DEIVVKKLSL (265 aa)) are amidoligase domain. Residue S13 coordinates CTP. Residue S13 participates in UTP binding. ATP-binding positions include 14-19 (SLGKGI) and D71. The Mg(2+) site is built by D71 and E139. Residues 146 to 148 (DIE), 186 to 191 (KTKPTQ), and K222 each bind CTP. Residues 186–191 (KTKPTQ) and K222 each bind UTP. Residues 290-541 (KIAMVGKYTE…VLAARIHHQE (252 aa)) enclose the Glutamine amidotransferase type-1 domain. L-glutamine is bound at residue G351. C378 functions as the Nucleophile; for glutamine hydrolysis in the catalytic mechanism. L-glutamine-binding positions include 379-382 (LGMQ), E402, and R469. Catalysis depends on residues H514 and E516.

This sequence belongs to the CTP synthase family. Homotetramer.

The enzyme catalyses UTP + L-glutamine + ATP + H2O = CTP + L-glutamate + ADP + phosphate + 2 H(+). It carries out the reaction L-glutamine + H2O = L-glutamate + NH4(+). The catalysed reaction is UTP + NH4(+) + ATP = CTP + ADP + phosphate + 2 H(+). The protein operates within pyrimidine metabolism; CTP biosynthesis via de novo pathway; CTP from UDP: step 2/2. With respect to regulation, allosterically activated by GTP, when glutamine is the substrate; GTP has no effect on the reaction when ammonia is the substrate. The allosteric effector GTP functions by stabilizing the protein conformation that binds the tetrahedral intermediate(s) formed during glutamine hydrolysis. Inhibited by the product CTP, via allosteric rather than competitive inhibition. In terms of biological role, catalyzes the ATP-dependent amination of UTP to CTP with either L-glutamine or ammonia as the source of nitrogen. Regulates intracellular CTP levels through interactions with the four ribonucleotide triphosphates. The protein is CTP synthase of Legionella pneumophila (strain Corby).